Reading from the N-terminus, the 461-residue chain is uncharacterized protein (461 aa).

13 helical membrane passes run 13 to 33, 54 to 74, 81 to 101, 120 to 140, 170 to 190, 211 to 231, 256 to 276, 286 to 306, 314 to 334, 349 to 369, 377 to 397, 399 to 419, and 439 to 459; these read GIIFILDIVLFFVLLNVLPFE, ALHVTITALLVPLLAVALGLV, VGFADPTIFLFFGGFSLATAL, GNLFIAVIYLFLITAFLSMWM, VFVLLGIAYSASIGGMGTLVG, YGLPIMIILLPLMIGILYIIF, FIIFPVIALTWIFSGKINPFI, IASFDSIVALLAAIVICSTGV, SNTDWGVLMLFGGGLTLSAVL, FMIDGQHFYLIGLLVAAFIIF, TASAALLVPIFISIAQSLGMP, IGLALIIGIGASCAFMLPVAT, and VGFLLNLVCVVVIATMGYMFW.

Belongs to the SLC13A/DASS transporter (TC 2.A.47) family. NADC subfamily.

The protein localises to the cell membrane. This is an uncharacterized protein from Haemophilus influenzae (strain ATCC 51907 / DSM 11121 / KW20 / Rd).